The primary structure comprises 129 residues: Cytochrome c-type protein SHP (129 aa).

The N-terminal stretch at 1–17 (MTRFLILSAVLAGPALA) is a signal peptide. Cys60, Cys63, and His64 together coordinate heme c. A disulfide bond links Cys106 and Cys114.

Binds 1 heme c group covalently per subunit.

In terms of biological role, high-spin cytochrome. Transiently bind oxygen during autoxidation, which occurs with a half-life of 3 minutes with a 4-fold excess of O(2). Also binds carbon monoxide, azide and cyanide. This Cereibacter sphaeroides (strain ATCC 17023 / DSM 158 / JCM 6121 / CCUG 31486 / LMG 2827 / NBRC 12203 / NCIMB 8253 / ATH 2.4.1.) (Rhodobacter sphaeroides) protein is Cytochrome c-type protein SHP (shp).